A 373-amino-acid chain; its full sequence is Transcription factor NF-E2 45 kDa subunit (373 aa).

Residues 1–83 (MSPCPPQQSR…SGFPLPPPPY (83 aa)) form a required for interaction with MAPK8 region. Residues 1 to 206 (MSPCPPQQSR…PAAETPLALE (206 aa)) form a transactivation domain region. 2 short sequence motifs (PXY motif) span residues 61 to 65 (PPTTY) and 79 to 83 (PPPPY). Residues 127–150 (LDIGLPAGPPKPQEDPESDSGLSL) are disordered. A Phosphoserine; by MAPK8 modification is found at serine 157. Serine 170 bears the Phosphoserine; by PKA mark. Residues 205 to 226 (LEPSSGPVRAKPTARGEAGSRD) are disordered. One can recognise a bZIP domain in the interval 266 to 329 (LVRDIRRRGK…EVMRQQLTEL (64 aa)). Positions 268 to 287 (RDIRRRGKNKVAAQNCRKRK) are basic motif. The leucine-zipper stretch occupies residues 291–298 (IVQLEREL). Lysine 368 is covalently cross-linked (Glycyl lysine isopeptide (Lys-Gly) (interchain with G-Cter in SUMO1)).

It belongs to the bZIP family. CNC subfamily. Homodimer; can bind DNA as a homodimer. Erythroid transcription activator nuclear factor erythroid-derived 2 (NF-E2), composed of a heterodimer of NFE2 and MAFK, possesses transactivation activity on beta-globin. Also forms high affinity heterodimer with MAFG; the interaction promotes erythropoiesis. Interacts (via the PXY motif 1) with ITCH (via the WW 1 domain); the interaction promotes 'Lys63'-linked ubiquitination of NFE2, translocates it to the cytoplasm and inhibits its transactivation activity. Interacts with KMT2D/MLL2; the interaction promotes transactivation of the beta-globin locus. Interacts with MAPK8 (phosphorylated form); the interaction leads to phosphorylation of NFE2 in undifferentiated cells. Phosphorylated on serine residues. In undifferentiated erythrocytes, phosphorylated by MAPK8 which then leads to ubiquitination and protein degradation. In terms of processing, sumoylated. Sumoylation is required for translocation to nuclear bodies PODs, anchoring to the gene loci, and transactivation of the beta-globin gene. Post-translationally, ubiquitinated mainly by 'Lys63'-linked ubiquitin. Polyubiquitination with 'Lys63'-linked ubiquitin by ITCH retains NFE2 in the cytoplasm preventing its transactivation activity. In undifferentiated erythrocyte, ubiquitinated after MAPK8-mediatd phosphorylation leading to protein degradation. Expressed in hematopoietic cells and also in colon and testis.

Its subcellular location is the nucleus. It localises to the PML body. The protein resides in the cytoplasm. Component of the NF-E2 complex essential for regulating erythroid and megakaryocytic maturation and differentiation. Binds to the hypersensitive site 2 (HS2) of the beta-globin control region (LCR). This subunit (NFE2) recognizes the TCAT/C sequence of the AP-1-like core palindrome present in a number of erythroid and megakaryocytic gene promoters. Requires MAFK or other small MAF proteins for binding to the NF-E2 motif. May play a role in all aspects of hemoglobin production from globin and heme synthesis to procurement of iron. The chain is Transcription factor NF-E2 45 kDa subunit (NFE2) from Homo sapiens (Human).